Consider the following 910-residue polypeptide: Coatomer subunit beta'-2 (910 aa).

WD repeat units follow at residues 13 to 52 (QRSE…MVKS), 55 to 94 (VTEL…KVKV), 97 to 136 (AHTD…MCTQ), 140 to 180 (GHSH…PNFT), 183 to 224 (GHSK…CVQT), 227 to 266 (GHAH…LENT), 269 to 309 (YGLE…ASMD), 351 to 393 (TCDL…GSAL), and 461 to 501 (RIDV…SHLD). The tract at residues 882–910 (ADGSTDGAVLVNGNDTEEQWGTNNEESSA) is disordered. Polar residues predominate over residues 900 to 910 (QWGTNNEESSA).

The protein belongs to the WD repeat COPB2 family. In terms of assembly, oligomeric complex that consists of at least the alpha, beta, beta', gamma, delta, epsilon and zeta subunits.

The protein localises to the cytoplasm. Its subcellular location is the golgi apparatus membrane. It is found in the cytoplasmic vesicle. The protein resides in the COPI-coated vesicle membrane. The coatomer is a cytosolic protein complex that binds to dilysine motifs and reversibly associates with Golgi non-clathrin-coated vesicles, which further mediate biosynthetic protein transport from the ER, via the Golgi up to the trans Golgi network. Coatomer complex is required for budding from Golgi membranes, and is essential for the retrograde Golgi-to-ER transport of dilysine-tagged proteins. The polypeptide is Coatomer subunit beta'-2 (Oryza sativa subsp. japonica (Rice)).